Consider the following 206-residue polypeptide: Ras-related protein Ral-B (206 aa).

Residue 21–29 coordinates GTP; that stretch reads GSGGVGKSA. The short motif at 43-51 is the Effector region element; the sequence is YEPTKADSY. GTP-binding positions include 68–72, 128–131, and 158–160; these read DTAGQ, NKSD, and SAK. The segment at 181 to 206 is disordered; that stretch reads MSENKDKNGRKSSKSKKSFKERCCLL. C203 is modified (cysteine methyl ester). C203 carries S-geranylgeranyl cysteine lipidation. The propeptide at 204–206 is removed in mature form; sequence CLL.

This sequence belongs to the small GTPase superfamily. Ras family. In terms of assembly, interacts with EXOC2/Sec5 and EXOC8/Exo84. Interacts (via effector domain) with RALBP1. Prenylation is essential for membrane localization. In terms of processing, the farnesylated form confers resistance to the proapoptotic and anti-anchorage-dependent growth effects of some geranylgeranyltransferase I inhibitors.

It is found in the cell membrane. The protein localises to the midbody. It catalyses the reaction GTP + H2O = GDP + phosphate + H(+). Its activity is regulated as follows. Alternates between an inactive form bound to GDP and an active form bound to GTP. Activated by a guanine nucleotide-exchange factor (GEF) and inactivated by a GTPase-activating protein (GAP). Functionally, multifunctional GTPase involved in a variety of cellular processes including gene expression, cell migration, cell proliferation, oncogenic transformation and membrane trafficking. Accomplishes its multiple functions by interacting with distinct downstream effectors. Acts as a GTP sensor for GTP-dependent exocytosis of dense core vesicles. Required both to stabilize the assembly of the exocyst complex and to localize functional exocyst complexes to the leading edge of migrating cells. Required for suppression of apoptosis. In late stages of cytokinesis, upon completion of the bridge formation between dividing cells, mediates exocyst recruitment to the midbody to drive abscission. Involved in ligand-dependent receptor mediated endocytosis of the EGF and insulin receptors. In Mus musculus (Mouse), this protein is Ras-related protein Ral-B (Ralb).